The following is a 1574-amino-acid chain: Multiple epidermal growth factor-like domains protein 6 (1574 aa).

The N-terminal stretch at 1–27 is a signal peptide; it reads MPVRAEARAAWRVVALALLLLPAMPAA. The EMI domain maps to 40–122; sequence MPHVCAEQKL…QKPGQEGCLS (83 aa). Cystine bridges form between Cys-44–Cys-108, Cys-74–Cys-80, Cys-107–Cys-120, Cys-127–Cys-138, Cys-134–Cys-147, Cys-149–Cys-162, Cys-168–Cys-179, Cys-175–Cys-188, Cys-190–Cys-203, Cys-209–Cys-220, Cys-216–Cys-230, Cys-232–Cys-245, Cys-251–Cys-262, Cys-258–Cys-271, Cys-273–Cys-286, Cys-292–Cys-303, Cys-299–Cys-312, Cys-314–Cys-327, Cys-338–Cys-349, Cys-345–Cys-358, Cys-360–Cys-373, Cys-379–Cys-389, Cys-385–Cys-398, Cys-400–Cys-411, Cys-419–Cys-430, Cys-426–Cys-439, Cys-441–Cys-454, Cys-524–Cys-537, Cys-531–Cys-544, Cys-546–Cys-555, Cys-568–Cys-580, Cys-574–Cys-587, Cys-589–Cys-598, Cys-611–Cys-623, Cys-617–Cys-630, Cys-632–Cys-641, Cys-654–Cys-668, Cys-660–Cys-675, Cys-677–Cys-686, Cys-699–Cys-711, Cys-705–Cys-718, Cys-722–Cys-731, Cys-744–Cys-755, Cys-750–Cys-762, Cys-764–Cys-773, Cys-786–Cys-799, Cys-793–Cys-806, Cys-808–Cys-817, Cys-830–Cys-842, Cys-836–Cys-849, Cys-851–Cys-860, Cys-873–Cys-886, Cys-879–Cys-893, Cys-895–Cys-904, Cys-917–Cys-929, Cys-923–Cys-936, Cys-938–Cys-947, Cys-960–Cys-972, Cys-966–Cys-979, Cys-981–Cys-990, Cys-1003–Cys-1015, Cys-1009–Cys-1022, Cys-1024–Cys-1033, Cys-1046–Cys-1058, Cys-1052–Cys-1065, Cys-1067–Cys-1076, Cys-1089–Cys-1101, Cys-1095–Cys-1108, Cys-1110–Cys-1119, Cys-1132–Cys-1144, Cys-1138–Cys-1151, Cys-1153–Cys-1162, Cys-1175–Cys-1187, Cys-1181–Cys-1194, Cys-1196–Cys-1205, Cys-1218–Cys-1231, Cys-1224–Cys-1238, Cys-1240–Cys-1249, Cys-1262–Cys-1274, Cys-1268–Cys-1281, Cys-1283–Cys-1292, Cys-1305–Cys-1317, Cys-1311–Cys-1324, Cys-1326–Cys-1335, Cys-1348–Cys-1360, Cys-1354–Cys-1367, Cys-1369–Cys-1378, Cys-1391–Cys-1403, Cys-1397–Cys-1410, Cys-1412–Cys-1421, Cys-1434–Cys-1446, Cys-1440–Cys-1453, Cys-1455–Cys-1464, Cys-1477–Cys-1489, Cys-1483–Cys-1496, Cys-1498–Cys-1507, Cys-1520–Cys-1532, Cys-1526–Cys-1539, and Cys-1541–Cys-1550. Positions 123–163 constitute an EGF-like 1; calcium-binding domain; that stretch reads DVDECASANGGCEGPCCNTVGGFYCRCPPGYQLQGDGKTCQ. Positions 164 to 204 constitute an EGF-like 2; calcium-binding domain; the sequence is DVDECRAHNGGCQHRCVNTPGSYLCECKPGFRLHTDGRTCL. EGF-like domains lie at 205–246 and 247–287; these read AISS…RRCV and RRSP…KTCE. The region spanning 288–328 is the EGF-like 5; calcium-binding domain; the sequence is DVDECALGLAQCAHGCLNTQGSFKCVCHAGYELGADGRQCY. EGF-like domains follow at residues 334–374 and 375–412; these read IVNS…KTCI and DIDD…DGCG. The EGF-like 8; calcium-binding domain occupies 415–455; it reads DVDECASGHGGCEHHCSNLAGSFQCFCEAGYRLDEDRRGCT. 24 EGF-like domains span residues 520–556, 564–599, 607–642, 650–687, 695–732, 740–774, 782–818, 826–861, 869–905, 913–948, 956–991, 999–1034, 1042–1077, 1085–1120, 1128–1163, 1171–1206, 1214–1250, 1258–1293, 1301–1336, 1344–1379, 1387–1422, 1430–1465, 1473–1508, and 1516–1551; these read FGHD…IICN, FGKN…AHCE, YGKH…RFCH, FGPG…ERCQ, FGPG…EDCG, FGVN…EDCG, WGLG…SRCQ, YGTG…LSCQ, WGPD…PRCE, YGPS…SFCE, FGLD…PRCA, FGLN…PTCL, YGKN…LACE, YAAG…DKCQ, FGVH…PHCE, FGEA…LSCE, FGKD…TGCL, YGPG…ADCS, FGPS…VRCE, FGKG…PHCE, YGAA…QACE, HGPG…QFCE, FGDG…AACD, and FGPG…PTCR. Polar residues predominate over residues 1555–1568; that stretch reads TQISSSRPAPQHPS. The tract at residues 1555 to 1574 is disordered; the sequence is TQISSSRPAPQHPSSRAMKH.

In terms of tissue distribution, expressed in lung.

It is found in the secreted. This Rattus norvegicus (Rat) protein is Multiple epidermal growth factor-like domains protein 6 (Megf6).